A 187-amino-acid polypeptide reads, in one-letter code: Large ribosomal subunit protein uL6 (187 aa).

It belongs to the universal ribosomal protein uL6 family. As to quaternary structure, part of the 50S ribosomal subunit.

Its function is as follows. This protein binds to the 23S rRNA, and is important in its secondary structure. It is located near the subunit interface in the base of the L7/L12 stalk, and near the tRNA binding site of the peptidyltransferase center. The sequence is that of Large ribosomal subunit protein uL6 from Thermosynechococcus vestitus (strain NIES-2133 / IAM M-273 / BP-1).